Reading from the N-terminus, the 387-residue chain is Probable WRKY transcription factor 36 (387 aa).

A DNA-binding region (WRKY) is located at residues 197 to 264 (CEDPSINDGC…YEGNHDHPLP (68 aa)). Residues 322 to 366 (RPNYPNQLPDDYPLSSSSFSLNFSSPDPPPPSSHDHTLNFSGLRT) form a disordered region. Low complexity predominate over residues 329 to 346 (LPDDYPLSSSSFSLNFSS).

It localises to the nucleus. Functionally, transcription factor. Interacts specifically with the W box (5'-(T)TGAC[CT]-3'), a frequently occurring elicitor-responsive cis-acting element. The protein is Probable WRKY transcription factor 36 (WRKY36) of Arabidopsis thaliana (Mouse-ear cress).